Reading from the N-terminus, the 214-residue chain is Pyridoxine/pyridoxamine 5'-phosphate oxidase (214 aa).

Residues 8–11 (RINY) and K66 each bind substrate. FMN is bound by residues 61–66 (RIVLIK), 76–77 (FT), R82, K83, and Q105. The substrate site is built by Y123, R127, and S131. FMN-binding positions include 140–141 (QS) and W184. Residue 190 to 192 (RLH) coordinates substrate. Residue R194 participates in FMN binding.

This sequence belongs to the pyridoxamine 5'-phosphate oxidase family. Homodimer. Requires FMN as cofactor.

The enzyme catalyses pyridoxamine 5'-phosphate + O2 + H2O = pyridoxal 5'-phosphate + H2O2 + NH4(+). It carries out the reaction pyridoxine 5'-phosphate + O2 = pyridoxal 5'-phosphate + H2O2. The protein operates within cofactor metabolism; pyridoxal 5'-phosphate salvage; pyridoxal 5'-phosphate from pyridoxamine 5'-phosphate: step 1/1. It participates in cofactor metabolism; pyridoxal 5'-phosphate salvage; pyridoxal 5'-phosphate from pyridoxine 5'-phosphate: step 1/1. Functionally, catalyzes the oxidation of either pyridoxine 5'-phosphate (PNP) or pyridoxamine 5'-phosphate (PMP) into pyridoxal 5'-phosphate (PLP). The chain is Pyridoxine/pyridoxamine 5'-phosphate oxidase from Burkholderia ambifaria (strain ATCC BAA-244 / DSM 16087 / CCUG 44356 / LMG 19182 / AMMD) (Burkholderia cepacia (strain AMMD)).